Consider the following 366-residue polypeptide: N-acetyl-6-hydroxytryptophan oxidase ivoB (366 aa).

The first 18 residues, 1-18, serve as a signal peptide directing secretion; it reads MHLLSSLAALAAAITVAF. Residues Asn-28 and Asn-81 are each glycosylated (N-linked (GlcNAc...) asparagine). Residues His-87 and His-96 each contribute to the Cu cation site. 2 N-linked (GlcNAc...) asparagine glycosylation sites follow: Asn-114 and Asn-121. His-291 lines the Cu cation pocket. N-linked (GlcNAc...) asparagine glycosylation occurs at Asn-319.

Belongs to the tyrosinase family. It depends on Cu(2+) as a cofactor.

The protein operates within pigment biosynthesis. With respect to regulation, activity is inhibited by 2,3-dihydroxynaphthalene, phenylhydrazine, diethyl dithiocarbamate and 8-hydroxyquinolene. Functionally, nonribosomal peptide synthetase; part of the pathway that mediates the biosynthesis of the gray-brown conidiophore pigment. The first step of the pathway is performed by the nonribosomal peptide synthetase ivoA that catalyzes ATP-dependent unidirectional stereoinversion of L-tryptophan to D-tryptophan with complete conversion. While the stereoinversion is catalyzed by the epimerization (E) domain of ivoA, the terminal condensation (C) domain stereoselectively hydrolyzes D-tryptophanyl-S-phosphopantetheine thioester and thus represents a non-canonical C domain function. D-tryptophan is acetylated, probably by an endogenous acetyltransferase. N-acetyltryptophan is further 6-hydroxylated into N-acetyl-6-hydroxytryptophan (AHT) by the cytochrome P450 monooxygenase ivoC. N-acetyl-6-hydroxytryptophan is substrate of the N-acetyl-6-hydroxytryptophan oxidase ivoB to produce the gray-brown conidiophore pigment. The chain is N-acetyl-6-hydroxytryptophan oxidase ivoB from Emericella nidulans (strain FGSC A4 / ATCC 38163 / CBS 112.46 / NRRL 194 / M139) (Aspergillus nidulans).